Reading from the N-terminus, the 380-residue chain is Cytochrome b (380 aa).

The next 4 helical transmembrane spans lie at 33–53 (FGSL…FLAM), 77–98 (WFIR…YIHV), 113–133 (WNVG…GYVL), and 178–198 (FFAF…VHLL). Histidine 83 and histidine 97 together coordinate heme b. Histidine 182 and histidine 196 together coordinate heme b. Histidine 201 contacts a ubiquinone. 4 helical membrane-spanning segments follow: residues 226-246 (TKDI…VLFA), 288-308 (LGGV…PYLY), 320-340 (LTQL…WIGA), and 347-367 (FITI…ILMP).

The protein belongs to the cytochrome b family. In terms of assembly, the cytochrome bc1 complex contains 11 subunits: 3 respiratory subunits (MT-CYB, CYC1 and UQCRFS1), 2 core proteins (UQCRC1 and UQCRC2) and 6 low-molecular weight proteins (UQCRH/QCR6, UQCRB/QCR7, UQCRQ/QCR8, UQCR10/QCR9, UQCR11/QCR10 and a cleavage product of UQCRFS1). This cytochrome bc1 complex then forms a dimer. Heme b serves as cofactor.

It localises to the mitochondrion inner membrane. In terms of biological role, component of the ubiquinol-cytochrome c reductase complex (complex III or cytochrome b-c1 complex) that is part of the mitochondrial respiratory chain. The b-c1 complex mediates electron transfer from ubiquinol to cytochrome c. Contributes to the generation of a proton gradient across the mitochondrial membrane that is then used for ATP synthesis. The polypeptide is Cytochrome b (MT-CYB) (Cricetomys emini (Emin's giant pouched rat)).